A 618-amino-acid chain; its full sequence is UvrABC system protein C (618 aa).

Residues 13–92 (DKPGVYLMKN…IKKYRPKYNI (80 aa)) form the GIY-YIG domain. Residues 204 to 239 (LDIVENFKLNMEKAAENLEFEKAAMLRDKINIIEKI) enclose the UVR domain.

The protein belongs to the UvrC family. Interacts with UvrB in an incision complex.

The protein localises to the cytoplasm. Its function is as follows. The UvrABC repair system catalyzes the recognition and processing of DNA lesions. UvrC both incises the 5' and 3' sides of the lesion. The N-terminal half is responsible for the 3' incision and the C-terminal half is responsible for the 5' incision. This is UvrABC system protein C from Clostridium botulinum (strain Loch Maree / Type A3).